We begin with the raw amino-acid sequence, 250 residues long: MADS-box transcription factor 47 (250 aa).

A compositionally biased stretch (gly residues) spans 1–10 (MAGGGGGGGR). 2 disordered regions span residues 1-20 (MAGG…AATG) and 196-250 (SRME…FSSK). Over residues 11 to 20 (GEGEGRAATG) the composition is skewed to basic and acidic residues. Residues 20–80 (GKRERIAIRR…GKLFQFASTS (61 aa)) form the MADS-box domain. One can recognise a K-box domain in the interval 106 to 198 (QGEDSSTCAR…QLQVSRMSRM (93 aa)). The span at 214–224 (GQSSESVTNAS) shows a compositional bias: polar residues.

May interact with MADS18. Expressed in roots, shoots and developing panicles. Expressed in mature stems and leaves, flowering panicles, developing seeds, and mature seeds.

The protein localises to the nucleus. Functionally, transcription factor that modulates expressions of multiple genes involved in cell signaling and gene transcription. Plays a negative regulatory role in brassinosteroid signaling. This Oryza sativa subsp. japonica (Rice) protein is MADS-box transcription factor 47.